Here is a 146-residue protein sequence, read N- to C-terminus: Anti-sigma F factor (146 aa).

This sequence belongs to the anti-sigma-factor family.

The enzyme catalyses L-seryl-[protein] + ATP = O-phospho-L-seryl-[protein] + ADP + H(+). It carries out the reaction L-threonyl-[protein] + ATP = O-phospho-L-threonyl-[protein] + ADP + H(+). In terms of biological role, binds to sigma F and blocks its ability to form an RNA polymerase holoenzyme (E-sigma F). Phosphorylates SpoIIAA on a serine residue. This phosphorylation may enable SpoIIAA to act as an anti-anti-sigma factor that counteracts SpoIIAB and thus releases sigma F from inhibition. This Geobacillus stearothermophilus (Bacillus stearothermophilus) protein is Anti-sigma F factor.